Here is a 220-residue protein sequence, read N- to C-terminus: NAD(P)H-hydrate epimerase (220 aa).

Positions 6-203 constitute a YjeF N-terminal domain; sequence ARHLTTLATG…SFDLPEALFH (198 aa). Residue 53-57 participates in (6S)-NADPHX binding; it reads HNGGV. 2 residues coordinate K(+): Asn-54 and Asp-116. (6S)-NADPHX is bound by residues 120–126 and Asp-149; that span reads GMRLEGP. K(+) is bound at residue Thr-152.

Belongs to the NnrE/AIBP family. It depends on K(+) as a cofactor.

It catalyses the reaction (6R)-NADHX = (6S)-NADHX. It carries out the reaction (6R)-NADPHX = (6S)-NADPHX. Catalyzes the epimerization of the S- and R-forms of NAD(P)HX, a damaged form of NAD(P)H that is a result of enzymatic or heat-dependent hydration. This is a prerequisite for the S-specific NAD(P)H-hydrate dehydratase to allow the repair of both epimers of NAD(P)HX. This Truepera radiovictrix (strain DSM 17093 / CIP 108686 / LMG 22925 / RQ-24) protein is NAD(P)H-hydrate epimerase.